We begin with the raw amino-acid sequence, 120 residues long: MKTIIVFLSLLVLATKFGDAKEGVNQEQKKEVTQNEFRVEYLNEMAAMSLLQQLEAXESALFEKEAGRNSRQXRCAMGDVPCTKGKTNCCKGYECKPKSPSWWYDTDFCQPIHGGRPIGI.

The signal sequence occupies residues 1 to 20; sequence MKTIIVFLSLLVLATKFGDA. Cystine bridges form between C75–C90, C82–C95, and C89–C109.

Belongs to the neurotoxin 14 (magi-1) family. 05 (ICK-7) subfamily. ICK-7 sub-subfamily. Expressed by the venom gland.

It localises to the secreted. In terms of biological role, ion channel inhibitor. This chain is U13-barytoxin-Tl1a, found in Trittame loki (Brush-footed trapdoor spider).